Consider the following 530-residue polypeptide: MEDDSLYLGGEWQFNHFSKLTSSRPDAAFAEIQRTSLPEKSPLSCETRVDLCDDLAPVARQLAPREKLPLSSRRPAAVGAGLQNMGNTCYVNASLQCLTYTPPLANYMLSREHSQTCHRHKGCMLCTMQAHITRALHNPGHVIQPSQALAAGFHRGKQEDAHEFLMFTVDAMKKACLPGHKQVDHHSKDTTLIHQIFGGYWRSQIKCLHCHGISDTFDPYLDIALDIQAAQSVQQALEQLVKPEELNGENAYHCGVCLQRAPASKTLTLHTSAKVLILVLKRFSDVTGNKIAKNVQYPECLDMQPYMSQQNTGPLVYVLYAVLVHAGWSCHNGHYFSYVKAQEGQWYKMDDAEVTAASITSVLSQQAYVLFYIQKSEWERHSESVSRGREPRALGAEDTDRRATQGELKRDHPCLQAPELDEHLVERATQESTLDHWKFLQEQNKTKPEFNVRKVEGTLPPDVLVIHQSKYKCGMKNHHPEQQSSLLNLSSSTPTHQESMNTGTLASLRGRARRSKGKNKHSKRALLVCQ.

One can recognise a USP domain in the interval 80-375 (AGLQNMGNTC…QAYVLFYIQK (296 aa)). Cysteine 89 acts as the Nucleophile in catalysis. The Proton acceptor role is filled by histidine 334. 2 stretches are compositionally biased toward basic and acidic residues: residues 382–392 (SESVSRGREPR) and 398–411 (DTDRRATQGELKRD). Disordered stretches follow at residues 382 to 411 (SESVSRGREPRALGAEDTDRRATQGELKRD) and 477 to 530 (NHHP…LVCQ). Positions 493–505 (TPTHQESMNTGTL) are enriched in polar residues. Residues 510-524 (GRARRSKGKNKHSKR) are compositionally biased toward basic residues.

This sequence belongs to the peptidase C19 family. USP17 subfamily.

It is found in the nucleus. Its subcellular location is the endoplasmic reticulum. The enzyme catalyses Thiol-dependent hydrolysis of ester, thioester, amide, peptide and isopeptide bonds formed by the C-terminal Gly of ubiquitin (a 76-residue protein attached to proteins as an intracellular targeting signal).. Deubiquitinating enzyme that removes conjugated ubiquitin from specific proteins to regulate different cellular processes that may include cell proliferation, progression through the cell cycle, apoptosis, cell migration, and the cellular response to viral infection. In Homo sapiens (Human), this protein is Ubiquitin carboxyl-terminal hydrolase 17-like protein 17 (USP17L17).